The following is a 212-amino-acid chain: uncharacterized protein (212 aa).

3 residues coordinate S-adenosyl-L-methionine: G53, E74, and D97.

The protein belongs to the methyltransferase superfamily. YrrT family.

Its function is as follows. Could be a S-adenosyl-L-methionine-dependent methyltransferase. This is an uncharacterized protein from Bacillus cereus (strain 03BB102).